Here is a 1388-residue protein sequence, read N- to C-terminus: Kinesin-like protein KIF15-A (1388 aa).

In terms of domain architecture, Kinesin motor spans 26–364; that stretch reads AIKVFVRIRP…LQFAQRAKLI (339 aa). 110-117 contacts ATP; it reads GQTGSGKT. Residues 369-1383 adopt a coiled-coil conformation; it reads VVNEDTQGNV…ENLFLKESKK (1015 aa). Residues 1127-1156 form a disordered region; it reads EQEKIRPASSNSSSPVVLPETPRTPEGNPY. Residues 1139 to 1388 form a necessary for its targeting to microtubule minus ends region; it reads SSPVVLPETP…KESKKCEHCN (250 aa).

The protein belongs to the TRAFAC class myosin-kinesin ATPase superfamily. Kinesin family. KLP2 subfamily. Homodimer. Dimerization is required for targeting to microtubule minus ends. Found in a complex with tpx2 and microtubules. Its association with microtubules and targeting to microtubule minus ends requires tpx2. Strongly expressed in testis and weakly in lung (at protein level).

It is found in the cytoplasm. The protein localises to the cytoskeleton. Its subcellular location is the microtubule organizing center. It localises to the centrosome. The protein resides in the spindle. It is found in the spindle pole. Plus-end directed kinesin-like motor enzyme involved in mitotic spindle assembly. Required for centrosome separation and maintenance of spindle bipolarity during mitosis. This Xenopus laevis (African clawed frog) protein is Kinesin-like protein KIF15-A (kif15-a).